A 339-amino-acid chain; its full sequence is Ferrochelatase (339 aa).

Fe cation contacts are provided by His202 and Glu283.

Belongs to the ferrochelatase family.

It is found in the cytoplasm. The enzyme catalyses heme b + 2 H(+) = protoporphyrin IX + Fe(2+). It functions in the pathway porphyrin-containing compound metabolism; protoheme biosynthesis; protoheme from protoporphyrin-IX: step 1/1. Functionally, catalyzes the ferrous insertion into protoporphyrin IX. The sequence is that of Ferrochelatase from Psychrobacter cryohalolentis (strain ATCC BAA-1226 / DSM 17306 / VKM B-2378 / K5).